The primary structure comprises 264 residues: NAD-capped RNA hydrolase NudC (264 aa).

Zn(2+)-binding residues include Cys99 and Cys102. Glu112 lines the substrate pocket. Positions 117 and 120 each coordinate Zn(2+). Tyr125 is a binding site for substrate. One can recognise a Nudix hydrolase domain in the interval 126-253; the sequence is PVICPSIIVA…TIARKLIHVT (128 aa). A divalent metal cation contacts are provided by Ala162, Glu178, and Glu182. The Nudix box signature appears at 163-184; that stretch reads GFVEVGETFEQAVQREVFEETG. 196-203 contributes to the substrate binding site; the sequence is QPWAFPNS. Residue Glu223 participates in a divalent metal cation binding. Ala246 contacts substrate.

This sequence belongs to the Nudix hydrolase family. NudC subfamily. Homodimer. Requires Mg(2+) as cofactor. The cofactor is Mn(2+). Zn(2+) serves as cofactor.

It catalyses the reaction a 5'-end NAD(+)-phospho-ribonucleoside in mRNA + H2O = a 5'-end phospho-adenosine-phospho-ribonucleoside in mRNA + beta-nicotinamide D-ribonucleotide + 2 H(+). It carries out the reaction NAD(+) + H2O = beta-nicotinamide D-ribonucleotide + AMP + 2 H(+). The catalysed reaction is NADH + H2O = reduced beta-nicotinamide D-ribonucleotide + AMP + 2 H(+). In terms of biological role, mRNA decapping enzyme that specifically removes the nicotinamide adenine dinucleotide (NAD) cap from a subset of mRNAs by hydrolyzing the diphosphate linkage to produce nicotinamide mononucleotide (NMN) and 5' monophosphate mRNA. The NAD-cap is present at the 5'-end of some mRNAs and stabilizes RNA against 5'-processing. Has preference for mRNAs with a 5'-end purine. Catalyzes the hydrolysis of a broad range of dinucleotide pyrophosphates. In Haemophilus influenzae (strain ATCC 51907 / DSM 11121 / KW20 / Rd), this protein is NAD-capped RNA hydrolase NudC.